The chain runs to 473 residues: Ion-translocating oxidoreductase complex subunit C (473 aa).

4Fe-4S ferredoxin-type domains lie at 328 to 357 (KNES…QQLY) and 368 to 396 (TKKH…VKYF). 8 residues coordinate [4Fe-4S] cluster: C337, C340, C343, C347, C376, C379, C382, and C386.

This sequence belongs to the 4Fe4S bacterial-type ferredoxin family. RnfC subfamily. In terms of assembly, the complex is composed of six subunits: RnfA, RnfB, RnfC, RnfD, RnfE and RnfG. Requires [4Fe-4S] cluster as cofactor.

The protein localises to the cell inner membrane. In terms of biological role, part of a membrane-bound complex that couples electron transfer with translocation of ions across the membrane. This chain is Ion-translocating oxidoreductase complex subunit C, found in Buchnera aphidicola subsp. Acyrthosiphon pisum (strain APS) (Acyrthosiphon pisum symbiotic bacterium).